The chain runs to 350 residues: 3-dehydroquinate synthase (350 aa).

NAD(+) is bound by residues 106–110 (GVIGD), 130–131 (TS), Lys-143, and Lys-152. 3 residues coordinate Zn(2+): Glu-185, His-246, and His-263.

It belongs to the sugar phosphate cyclases superfamily. Dehydroquinate synthase family. It depends on Co(2+) as a cofactor. Requires Zn(2+) as cofactor. NAD(+) is required as a cofactor.

The protein resides in the cytoplasm. The enzyme catalyses 7-phospho-2-dehydro-3-deoxy-D-arabino-heptonate = 3-dehydroquinate + phosphate. It functions in the pathway metabolic intermediate biosynthesis; chorismate biosynthesis; chorismate from D-erythrose 4-phosphate and phosphoenolpyruvate: step 2/7. Catalyzes the conversion of 3-deoxy-D-arabino-heptulosonate 7-phosphate (DAHP) to dehydroquinate (DHQ). This chain is 3-dehydroquinate synthase, found in Clostridium botulinum (strain Alaska E43 / Type E3).